Here is a 462-residue protein sequence, read N- to C-terminus: Chitinase 1 (462 aa).

Residues 1–17 form the signal peptide; it reads MILNLIILLAISIVASA. The region spanning 18 to 291 is the GH18 domain; sequence SNIAAYWGQN…NQLYQALSGS (274 aa). An N-linked (GlcNAc...) asparagine glycan is attached at Asn-57. Residue Glu-147 is the Proton donor of the active site.

This sequence belongs to the glycosyl hydrolase 18 family. Chitinase class III subfamily.

It is found in the secreted. It carries out the reaction Random endo-hydrolysis of N-acetyl-beta-D-glucosaminide (1-&gt;4)-beta-linkages in chitin and chitodextrins.. The polypeptide is Chitinase 1 (CHT1) (Candida albicans (Yeast)).